The primary structure comprises 466 residues: Asparagine--tRNA ligase (466 aa).

The protein belongs to the class-II aminoacyl-tRNA synthetase family. In terms of assembly, homodimer.

Its subcellular location is the cytoplasm. The enzyme catalyses tRNA(Asn) + L-asparagine + ATP = L-asparaginyl-tRNA(Asn) + AMP + diphosphate + H(+). The chain is Asparagine--tRNA ligase from Wigglesworthia glossinidia brevipalpis.